The sequence spans 497 residues: MACRRRLLPCAGLGLFGVLCWVWVSFASFPDDQLPLEVFDTVDRGAFLPQSAFREMEFASIASYKGPGNTDGRSNKQLPILLWWSAGLFPHFPGDTERIDCALSSCLVTSNRKVQLYKRTASIIFYGTDFRAYEAPLPRLPHQTWALFHEESPMNNYFLSHAPGIRLFNYTATFRRESDYPLTLQWLPSLDYLLRPVAVSLEEKNRLRREGMAPVLYMQSHCDVPSDRDRYVQELMKYIQVDSYGKCLKNKPLPEHLEDTATATGEEPGFMNFVARYKFHLAFENGLCPDYMTEKLWRPLHQGCVPVYRGSPAVADWMPNGHAAIIIDNFPSPKALADFLRHLDENDDEYTRYLEFKNLKSITNTRLLEALETREWGVNDMSKPNYLNGFECYVCDQENARLAAERAHRKDPERNPPPLPKMASNSHMGCPLPSPGYGQVQDLPADDGWLQIWPQDYWQSLDQAEGLESLIRHNESDPSLLWRHIQSITERRARGKH.

Residues 1–6 (MACRRR) are Cytoplasmic-facing. The chain crosses the membrane as a helical; Signal-anchor for type II membrane protein span at residues 7-27 (LLPCAGLGLFGVLCWVWVSFA). Residues 28–497 (SFPDDQLPLE…ITERRARGKH (470 aa)) are Lumenal-facing. Asn-169 carries N-linked (GlcNAc...) asparagine glycosylation. The cysteines at positions 392 and 395 are disulfide-linked. Positions 406-427 (RAHRKDPERNPPPLPKMASNSH) are disordered. N-linked (GlcNAc...) asparagine glycosylation is present at Asn-474.

Belongs to the glycosyltransferase 10 family.

The protein localises to the endoplasmic reticulum membrane. It carries out the reaction L-threonyl-[protein] + GDP-beta-L-fucose = 3-O-(alpha-L-fucosyl)-L-threonyl-[protein] + GDP + H(+). The catalysed reaction is L-seryl-[protein] + GDP-beta-L-fucose = 3-O-(alpha-L-fucosyl)-L-seryl-[protein] + GDP + H(+). Its pathway is protein modification; protein glycosylation. Its function is as follows. Protein O-fucosyltransferase that specifically catalyzes O-fucosylation of serine or threonine residues in EMI domains of target proteins. Attaches fucose through an O-glycosidic linkage. O-fucosylation of EMI domain-containing proteins may be required for facilitating protein folding and secretion. This Oryzias latipes (Japanese rice fish) protein is GDP-fucose protein O-fucosyltransferase 4 (fut11).